We begin with the raw amino-acid sequence, 478 residues long: Cell division protein FtsZ homolog 2-1, chloroplastic (478 aa).

The segment at 86–112 (EGTSTIVNPRKETSSGPVVEDFEEPSA) is disordered. 128-132 (GGGSN) contributes to the GTP binding site. Ser143 is modified (phosphoserine; by PGK1). GTP is bound by residues 217–219 (GTG), Glu248, and Arg252. Thr286 carries the phosphothreonine; by PGK1 modification. Asp296 is a GTP binding site.

The protein belongs to the FtsZ family. In terms of assembly, aggregates to form a contractile ring-like structure; contraction of the ring was accompanied by an increase in the filament turnover rate. Self-interacts and binds to FTSZ1 in heteromers to form two morphologically distinct types of filaments, termed type-I (smooth filaments) and -II (rough filaments), in a GTP-dependent manner; the GDP-induced disassembly is inhibited by ARC6. Interacts (via C-terminus) with ARC6; this interaction enables ARC3 binding to FTSZ2. Part of a complex made of ARC3, ARC6, FTSZ1 and FTSZ2. Binds to MCD1 in an ARC6-dependent manner. Binds to CDP1/PARC6. Part of a complex made of CDP1/PARC6, ARC3 and FtsZ proteins in the middle of the plastid; this complex enhances the dynamics of Z rings during chloroplast division. Binds to PGK1. Post-translationally, filaments containing FTSZ2-1 are stabilized when in complex with GTP but destabilized after conversion of GTP into GDP; ARC6 conteracts this destabilisation by preventing the dissociation of GDP-bound FTSZ2 molecules thus inhibiting filament disassembly whereas ARC3 promotes GTPase activity thus accelerating the conversion of GTP into GDP and triggering FtsZ2 filaments disassembly. In terms of processing, phosphorylation at Ser-143 is necessary for interactions with ARC3, ARC6, FTSZ1 and FTSZ2-2. Phosphorylations at Ser-143 and Thr-286 are required for the formation of contractile ring at the chloroplast midpoint.

Its subcellular location is the plastid. It is found in the chloroplast stroma. It localises to the chloroplast thylakoid membrane. GTPase activity is enhanced by ARC3. Its function is as follows. Exhibits GTPase activity which converts GTP ligands to GDP. Component of the plastid division machinery consisting in a binary fission accomplished by the simultaneous constriction of the FtsZ ring on the stromal side of the inner envelope membrane, and the ARC5 ring on the cytosolic side of the outer envelope membrane. Required for plastid division in a dose-dependent manner. In the vegetative shoot apex, at the shoot apical meristem (SAM), where the proplastid-to-chloroplast transition takes place, major contributor of plastid division in the L1 and L3 layers and contributes equally with FTSZ1 in the L2 layer. The sequence is that of Cell division protein FtsZ homolog 2-1, chloroplastic from Arabidopsis thaliana (Mouse-ear cress).